Consider the following 274-residue polypeptide: Putative phosphoenolpyruvate synthase regulatory protein (274 aa).

Position 154–161 (154–161 (GVSRCGKT)) interacts with ADP.

This sequence belongs to the pyruvate, phosphate/water dikinase regulatory protein family. PSRP subfamily.

The catalysed reaction is [pyruvate, water dikinase] + ADP = [pyruvate, water dikinase]-phosphate + AMP + H(+). It carries out the reaction [pyruvate, water dikinase]-phosphate + phosphate + H(+) = [pyruvate, water dikinase] + diphosphate. In terms of biological role, bifunctional serine/threonine kinase and phosphorylase involved in the regulation of the phosphoenolpyruvate synthase (PEPS) by catalyzing its phosphorylation/dephosphorylation. The protein is Putative phosphoenolpyruvate synthase regulatory protein of Pseudomonas aeruginosa (strain LESB58).